The primary structure comprises 243 residues: Small ribosomal subunit protein uS3 (243 aa).

Positions 38–106 (IRKYLNARLA…DIQINIFEVK (69 aa)) constitute a KH type-2 domain. The tract at residues 217 to 243 (TQTKESGRGGNGNNNGGKNFKRKKNNR) is disordered.

Belongs to the universal ribosomal protein uS3 family. As to quaternary structure, part of the 30S ribosomal subunit. Forms a tight complex with proteins S10 and S14.

In terms of biological role, binds the lower part of the 30S subunit head. Binds mRNA in the 70S ribosome, positioning it for translation. The chain is Small ribosomal subunit protein uS3 from Phocaeicola vulgatus (strain ATCC 8482 / DSM 1447 / JCM 5826 / CCUG 4940 / NBRC 14291 / NCTC 11154) (Bacteroides vulgatus).